Here is a 71-residue protein sequence, read N- to C-terminus: Small ribosomal subunit protein bS21 (71 aa).

This sequence belongs to the bacterial ribosomal protein bS21 family.

This Marinobacter nauticus (strain ATCC 700491 / DSM 11845 / VT8) (Marinobacter aquaeolei) protein is Small ribosomal subunit protein bS21.